Here is a 252-residue protein sequence, read N- to C-terminus: Chaperone protein AggD (252 aa).

Residues M1–A22 form the signal peptide.

It belongs to the periplasmic pilus chaperone family.

It is found in the periplasm. Its function is as follows. Involved in the biogenesis of the AAF/I fimbriae. In Escherichia coli, this protein is Chaperone protein AggD (aggD).